The following is a 562-amino-acid chain: 3-(3-hydroxy-phenyl)propionate/3-hydroxycinnamic acid hydroxylase (562 aa).

FAD is bound by residues 8 to 37 and 275 to 285; these read DVVI…IIEE and FRKGRMLLAGD.

The protein belongs to the PheA/TfdB FAD monooxygenase family. It depends on FAD as a cofactor.

It carries out the reaction 3-(3-hydroxyphenyl)propanoate + NADH + O2 + H(+) = 3-(2,3-dihydroxyphenyl)propanoate + NAD(+) + H2O. It catalyses the reaction (2E)-3-(3-hydroxyphenyl)prop-2-enoate + NADH + O2 + H(+) = (2E)-3-(2,3-dihydroxyphenyl)prop-2-enoate + NAD(+) + H2O. Its pathway is aromatic compound metabolism; 3-phenylpropanoate degradation. Catalyzes the insertion of one atom of molecular oxygen into position 2 of the phenyl ring of 3-(3-hydroxyphenyl)propionate (3-HPP) and hydroxycinnamic acid (3HCI). This chain is 3-(3-hydroxy-phenyl)propionate/3-hydroxycinnamic acid hydroxylase, found in Mycolicibacterium smegmatis (strain ATCC 700084 / mc(2)155) (Mycobacterium smegmatis).